The following is a 395-amino-acid chain: uncharacterized protein (395 aa).

A signal peptide spans 1-18 (MKHVIMLYFIAAATLFSS). Cys-19 carries N-palmitoyl cysteine lipidation. Cys-19 is lipidated: S-diacylglycerol cysteine.

The protein resides in the cell outer membrane. May be involved in ulvan degradation. Ulvan is the main polysaccharide component of the Ulvales (green seaweed) cell wall. It is composed of disaccharide building blocks comprising 3-sulfated rhamnose (Rha3S) linked to D-glucuronic acid (GlcA), L-iduronic acid (IduA), or D-xylose (Xyl). This is an uncharacterized protein from Formosa agariphila (strain DSM 15362 / KCTC 12365 / LMG 23005 / KMM 3901 / M-2Alg 35-1).